The chain runs to 64 residues: Small ribosomal subunit protein bS21 (64 aa).

Belongs to the bacterial ribosomal protein bS21 family.

This Neorickettsia sennetsu (strain ATCC VR-367 / Miyayama) (Ehrlichia sennetsu) protein is Small ribosomal subunit protein bS21.